Reading from the N-terminus, the 180-residue chain is dCTP deaminase, dUMP-forming (180 aa).

Residues 96–101 (RSSLGR), Asp-113, 121–123 (TLE), Gln-142, Tyr-156, and Gln-163 contribute to the dCTP site. The active-site Proton donor/acceptor is Glu-123.

It belongs to the dCTP deaminase family. As to quaternary structure, homotrimer.

The catalysed reaction is dCTP + 2 H2O = dUMP + NH4(+) + diphosphate. The protein operates within pyrimidine metabolism; dUMP biosynthesis; dUMP from dCTP: step 1/1. Functionally, bifunctional enzyme that catalyzes both the deamination of dCTP to dUTP and the hydrolysis of dUTP to dUMP without releasing the toxic dUTP intermediate. In Aquifex aeolicus (strain VF5), this protein is dCTP deaminase, dUMP-forming.